The primary structure comprises 1165 residues: Peroxisomal ATPase PEX6 (1165 aa).

Belongs to the AAA ATPase family. In terms of assembly, interacts with PEX1; forming the PEX1-PEX6 AAA ATPase complex, which is composed of a heterohexamer formed by a trimer of PEX1-PEX6 dimers.

It localises to the membrane. The catalysed reaction is ATP + H2O = ADP + phosphate + H(+). Functionally, component of the PEX1-PEX6 AAA ATPase complex involved in peroxisome biosynthesis. The complex acts as a protein dislocase complex that mediates the ATP-dependent extraction of the PEX5 receptor from peroxisomal membranes, an essential step for PEX5 recycling. Specifically recognizes PEX5 monoubiquitinated at 'Cys-6', and pulls it out of the peroxisome lumen through the PEX2-PEX10-PEX12 retrotranslocation channel. Extraction by the PEX1-PEX6 AAA ATPase complex is accompanied by unfolding of the TPR repeats and release of bound cargo from PEX5. The polypeptide is Peroxisomal ATPase PEX6 (Komagataella pastoris (Yeast)).